Reading from the N-terminus, the 354-residue chain is Neutral protease 2 homolog SNOG_02177 (354 aa).

The first 19 residues, 1–19 (MKFQILSVAALASLASAVS), serve as a signal peptide directing secretion. Positions 20-182 (DALDKRDSPL…WIDLAKRTIV (163 aa)) are excised as a propeptide. 2 disulfide bridges follow: C186–C257 and C264–C282. N-linked (GlcNAc...) asparagine glycosylation is present at N214. Residue H306 participates in Zn(2+) binding. The active site involves E307. Position 310 (H310) interacts with Zn(2+).

This sequence belongs to the peptidase M35 family. Zn(2+) is required as a cofactor.

The protein localises to the secreted. It carries out the reaction Preferential cleavage of bonds with hydrophobic residues in P1'. Also 3-Asn-|-Gln-4 and 8-Gly-|-Ser-9 bonds in insulin B chain.. Functionally, secreted metalloproteinase that allows assimilation of proteinaceous substrates. Shows high activities on basic nuclear substrates such as histone and protamine. This Phaeosphaeria nodorum (strain SN15 / ATCC MYA-4574 / FGSC 10173) (Glume blotch fungus) protein is Neutral protease 2 homolog SNOG_02177.